Here is a 192-residue protein sequence, read N- to C-terminus: dCTP deaminase, dUMP-forming (192 aa).

DCTP is bound by residues Lys101 to Arg106, Asp119, Thr127 to Glu129, Gln148, Tyr162, and Gln174. Glu129 acts as the Proton donor/acceptor in catalysis. The interval Tyr171–Arg192 is disordered.

The protein belongs to the dCTP deaminase family. As to quaternary structure, homotrimer.

It catalyses the reaction dCTP + 2 H2O = dUMP + NH4(+) + diphosphate. The protein operates within pyrimidine metabolism; dUMP biosynthesis; dUMP from dCTP: step 1/1. Its function is as follows. Bifunctional enzyme that catalyzes both the deamination of dCTP to dUTP and the hydrolysis of dUTP to dUMP without releasing the toxic dUTP intermediate. This Salinispora arenicola (strain CNS-205) protein is dCTP deaminase, dUMP-forming.